Consider the following 423-residue polypeptide: ATP-dependent Clp protease ATP-binding subunit ClpX (423 aa).

In terms of domain architecture, ClpX-type ZB spans 1-50; sequence MTDDTEYRCSFCGKEHHQVDDLIAGPDVRICSECVVLSCEIVEDRRNEAL. 4 residues coordinate Zn(2+): C9, C12, C31, and C34. 126 to 133 provides a ligand contact to ATP; that stretch reads PTGCGKTY.

Belongs to the ClpX chaperone family. Component of the ClpX-ClpP complex. Forms a hexameric ring that, in the presence of ATP, binds to fourteen ClpP subunits assembled into a disk-like structure with a central cavity, resembling the structure of eukaryotic proteasomes.

Functionally, ATP-dependent specificity component of the Clp protease. It directs the protease to specific substrates. Can perform chaperone functions in the absence of ClpP. This chain is ATP-dependent Clp protease ATP-binding subunit ClpX, found in Tropheryma whipplei (strain Twist) (Whipple's bacillus).